The chain runs to 322 residues: Aspartate carbamoyltransferase catalytic subunit (322 aa).

Residues arginine 70 and threonine 71 each contribute to the carbamoyl phosphate site. An L-aspartate-binding site is contributed by lysine 98. The carbamoyl phosphate site is built by arginine 120, histidine 150, and glutamine 153. The L-aspartate site is built by arginine 184 and arginine 239. Carbamoyl phosphate contacts are provided by glycine 280 and proline 281.

This sequence belongs to the aspartate/ornithine carbamoyltransferase superfamily. ATCase family. In terms of assembly, heterododecamer (2C3:3R2) of six catalytic PyrB chains organized as two trimers (C3), and six regulatory PyrI chains organized as three dimers (R2).

The enzyme catalyses carbamoyl phosphate + L-aspartate = N-carbamoyl-L-aspartate + phosphate + H(+). It participates in pyrimidine metabolism; UMP biosynthesis via de novo pathway; (S)-dihydroorotate from bicarbonate: step 2/3. Catalyzes the condensation of carbamoyl phosphate and aspartate to form carbamoyl aspartate and inorganic phosphate, the committed step in the de novo pyrimidine nucleotide biosynthesis pathway. This is Aspartate carbamoyltransferase catalytic subunit from Xylella fastidiosa (strain 9a5c).